Here is a 208-residue protein sequence, read N- to C-terminus: Golgi apparatus membrane protein TVP23 homolog B (208 aa).

Residue methionine 1 is modified to N-acetylmethionine. A compositionally biased stretch (acidic residues) spans 1-21; the sequence is MLQQDSNDDTEDVSLFDAEEE. The segment at 1 to 27 is disordered; the sequence is MLQQDSNDDTEDVSLFDAEEETTNRPK. The next 4 membrane-spanning stretches (helical) occupy residues 34-53, 54-72, 126-146, and 152-172; these read PVAS…VYLL, CELF…ILLL, IFWL…FSAL, and KWLA…YGYI.

It belongs to the TVP23 family.

Its subcellular location is the membrane. This chain is Golgi apparatus membrane protein TVP23 homolog B (TVP23B), found in Bos taurus (Bovine).